We begin with the raw amino-acid sequence, 1747 residues long: Retroelement silencing factor 1 (1747 aa).

Lysine 216 participates in a covalent cross-link: Glycyl lysine isopeptide (Lys-Gly) (interchain with G-Cter in SUMO2). Position 221 is a phosphoserine (serine 221). The segment covering 261-272 (TSAVPSQQYATQ) has biased composition (polar residues). Residues 261-280 (TSAVPSQQYATQTDKRPPPP) are disordered. Lysine 707 participates in a covalent cross-link: Glycyl lysine isopeptide (Lys-Gly) (interchain with G-Cter in SUMO2). Disordered stretches follow at residues 833–856 (PLTQ…NVNQ), 923–956 (PQKP…GFQK), and 1073–1101 (EGSV…KDPA). Residues 842–856 (ESTNGNSEVTPNVNQ) are compositionally biased toward polar residues. Residues 937–956 (REPEKQLDNTTENKDFGFQK) are compositionally biased toward basic and acidic residues. Residues 1073–1087 (EGSVGQQTTYQTSED) are compositionally biased toward polar residues. Positions 1089-1101 (TADKTSSDSKDPA) are enriched in basic and acidic residues. Lysine 1136 participates in a covalent cross-link: Glycyl lysine isopeptide (Lys-Gly) (interchain with G-Cter in SUMO2). Serine 1145 bears the Phosphoserine mark. The tract at residues 1200-1274 (EEKQKEQCSP…KSLPRTEQEL (75 aa)) is disordered. Residues 1217–1226 (QGERTSDRDV) show a composition bias toward basic and acidic residues. Residue threonine 1240 is modified to Phosphothreonine. Residues 1242 to 1261 (PDGKSHFPELQDDSRKDTPK) show a composition bias toward basic and acidic residues. Position 1358 is a phosphoserine (serine 1358). Glycyl lysine isopeptide (Lys-Gly) (interchain with G-Cter in SUMO2) cross-links involve residues lysine 1528 and lysine 1636. Residues 1686-1716 (KRTQKDSQERDNVNSRLSKRSFSADGFEMLQ) are disordered. The segment covering 1689-1698 (QKDSQERDNV) has biased composition (basic and acidic residues). Residue serine 1708 is modified to Phosphoserine. Lysine 1723 participates in a covalent cross-link: Glycyl lysine isopeptide (Lys-Gly) (interchain with G-Cter in SUMO2). Residue serine 1740 is modified to Phosphoserine.

As to quaternary structure, interacts with SETDB1.

The protein localises to the nucleus. Its function is as follows. Plays a role in the regulation of imprinted gene expression, regulates repressive epigenetic modifications associated with SETDB1. Required for the recruitment or accumulation of SETDB1 to the endogenous retroviruses (ERVs) and maintenance of repressive chromatin configuration, contributing to a subset of the SETDB1-dependent ERV silencing in embryonic stem cells. This chain is Retroelement silencing factor 1, found in Homo sapiens (Human).